We begin with the raw amino-acid sequence, 125 residues long: Protein ELF4-LIKE 1 (125 aa).

Polar residues predominate over residues 1 to 18 (MEASRNRSLVGNNRSPEM). Residues 1 to 28 (MEASRNRSLVGNNRSPEMNENDGEDVAA) are disordered.

Belongs to the EARLY FLOWERING 4 family. In terms of assembly, homodimer.

It is found in the nucleus. Component of the central CCA1/LHY-TOC1 feedback loop in the circadian clock that promotes clock accuracy and is required for sustained rhythms in the absence of daily light/dark cycles. The protein is Protein ELF4-LIKE 1 (EFL1) of Arabidopsis thaliana (Mouse-ear cress).